The primary structure comprises 349 residues: 3-isopropylmalate dehydrogenase (349 aa).

Substrate contacts are provided by R91, R101, R129, and D219. Positions 219, 243, and 247 each coordinate Mg(2+). 277 to 289 (GSAPDIAGLGKAN) serves as a coordination point for NAD(+).

This sequence belongs to the isocitrate and isopropylmalate dehydrogenases family. LeuB type 1 subfamily. As to quaternary structure, homodimer. Mg(2+) serves as cofactor. Mn(2+) is required as a cofactor.

It localises to the cytoplasm. It catalyses the reaction (2R,3S)-3-isopropylmalate + NAD(+) = 4-methyl-2-oxopentanoate + CO2 + NADH. It participates in amino-acid biosynthesis; L-leucine biosynthesis; L-leucine from 3-methyl-2-oxobutanoate: step 3/4. In terms of biological role, catalyzes the oxidation of 3-carboxy-2-hydroxy-4-methylpentanoate (3-isopropylmalate) to 3-carboxy-4-methyl-2-oxopentanoate. The product decarboxylates to 4-methyl-2 oxopentanoate. The chain is 3-isopropylmalate dehydrogenase from Zymomonas mobilis subsp. mobilis (strain ATCC 31821 / ZM4 / CP4).